Reading from the N-terminus, the 267-residue chain is uncharacterized protein (267 aa).

Residues 30-52 form a helical membrane-spanning segment; it reads FMRIFLLFLFFVLFTFGVEGYVI.

The protein localises to the membrane. This is an uncharacterized protein from Aquifex aeolicus (strain VF5).